The sequence spans 120 residues: uncharacterized protein (120 aa).

Residues 93–109 (LCVGISTTMIIQVLFLL) traverse the membrane as a helical segment.

It is found in the membrane. This is an uncharacterized protein from Saccharomyces cerevisiae (strain ATCC 204508 / S288c) (Baker's yeast).